Here is a 129-residue protein sequence, read N- to C-terminus: Small ribosomal subunit protein uS11 (129 aa).

It belongs to the universal ribosomal protein uS11 family. As to quaternary structure, part of the 30S ribosomal subunit. Interacts with proteins S7 and S18. Binds to IF-3.

Its function is as follows. Located on the platform of the 30S subunit, it bridges several disparate RNA helices of the 16S rRNA. Forms part of the Shine-Dalgarno cleft in the 70S ribosome. The polypeptide is Small ribosomal subunit protein uS11 (Idiomarina loihiensis (strain ATCC BAA-735 / DSM 15497 / L2-TR)).